The chain runs to 114 residues: Pro-FMRFamide-related neuropeptide FF (114 aa).

The signal sequence occupies residues 1 to 21 (MDSKWAAVLLLLLLLRNWGHA). Residues 22-69 (EEAGSWGEDQVFAEEDKGPHPSQYAHTPDRIQTPGSLMRVLLQAMERP) constitute a propeptide that is removed on maturation. The interval 29–51 (EDQVFAEEDKGPHPSQYAHTPDR) is disordered. Position 82 is a phenylalanine amide (Phe-82). The propeptide occupies 85-100 (NAWGPWSKEQLSPQAR). Phe-111 is modified (phenylalanine amide).

Belongs to the FARP (FMRFamide related peptide) family.

The protein localises to the secreted. Morphine modulating peptides. Have wide-ranging physiologic effects, including the modulation of morphine-induced analgesia, elevation of arterial blood pressure, and increased somatostatin secretion from the pancreas. Neuropeptide FF and SF potentiate and sensitize ASIC2 and ASIC3 channels. This Rattus norvegicus (Rat) protein is Pro-FMRFamide-related neuropeptide FF (Npff).